The primary structure comprises 337 residues: QPSPVPVGATVMVWIYGGGFMSGTASLDVYDGRYIAATQGVIVASMNYRTGAMGFLSLGNSEAPGNAGLMDQNLALTWIKENVASFGGDQSKVSIFGESAGAASVSYHLLSPMSKNLFQRAIMESASALSPWALLPDAEAHRRGVELAKAVGCSTDSDIEETIECMRGVPALTISENEWVVWGLCQFPFAPVVDGNFIREHPTVSLQTGNLKQTDVMVGFNNDEGVYFLLYGAPGFSKDTQSLITRDQYLEGIKMSVMGINDISVDALSFQYIDWVNFDQPSMYRDAIDNLSGDYNFICPALSFGKAMASFMGRKTYQYKFVHQASNFPWPKWTGVM.

Serine 99 acts as the Acyl-ester intermediate in catalysis. Cysteine 153 and cysteine 165 form a disulfide bridge. Glutamate 224 functions as the Charge relay system in the catalytic mechanism. N-linked (GlcNAc...) asparagine glycosylation occurs at asparagine 290.

Belongs to the type-B carboxylesterase/lipase family.

It carries out the reaction an acylcholine + H2O = a carboxylate + choline + H(+). In Branchiostoma lanceolatum (Common lancelet), this protein is Cholinesterase 2 (CHE2).